The primary structure comprises 358 residues: MRDRLLAAEKVKAIDWRDGALHLLDQRVLPFEENWIAYTSAAGVAEAIRSMVVRGAPAIGISAAYGIVLAARARIAEGGDWYAALEEDFMLLADSRPTAVNLFWALNRMHDRLDRLKENADPLAALEAEAIAIHESDREANLTMAQLGVDLIRKHQGNAQAILTHCNTGALATGGFGTALGVIRAAFIEGMVERVYADETRPWLQGSRLTAWELANEGIPVTLNADSAAAHIMKTKGVTWVIVGADRITANGDVANKIGTYQLAVNAMHHGVRFMVVAPSSTIDMNLASGDDIPIEERDGAELLEVGGKRVGADVEAFNPVFDVTPADLIDAIVTEKGIVERPDTAKMAQLMCRKRLH.

Residues 54–56 (RGA), arginine 96, and glutamine 205 contribute to the substrate site. Aspartate 246 functions as the Proton donor in the catalytic mechanism. 256–257 (NK) is a binding site for substrate.

The protein belongs to the eIF-2B alpha/beta/delta subunits family. MtnA subfamily.

The enzyme catalyses 5-(methylsulfanyl)-alpha-D-ribose 1-phosphate = 5-(methylsulfanyl)-D-ribulose 1-phosphate. The protein operates within amino-acid biosynthesis; L-methionine biosynthesis via salvage pathway; L-methionine from S-methyl-5-thio-alpha-D-ribose 1-phosphate: step 1/6. In terms of biological role, catalyzes the interconversion of methylthioribose-1-phosphate (MTR-1-P) into methylthioribulose-1-phosphate (MTRu-1-P). This chain is Methylthioribose-1-phosphate isomerase, found in Pseudomonas fluorescens (strain Pf0-1).